A 153-amino-acid chain; its full sequence is D-aminoacyl-tRNA deacylase (153 aa).

A Gly-cisPro motif, important for rejection of L-amino acids motif is present at residues 137-138 (GP).

Belongs to the DTD family. In terms of assembly, homodimer.

It is found in the cytoplasm. It carries out the reaction glycyl-tRNA(Ala) + H2O = tRNA(Ala) + glycine + H(+). The catalysed reaction is a D-aminoacyl-tRNA + H2O = a tRNA + a D-alpha-amino acid + H(+). An aminoacyl-tRNA editing enzyme that deacylates mischarged D-aminoacyl-tRNAs. Also deacylates mischarged glycyl-tRNA(Ala), protecting cells against glycine mischarging by AlaRS. Acts via tRNA-based rather than protein-based catalysis; rejects L-amino acids rather than detecting D-amino acids in the active site. By recycling D-aminoacyl-tRNA to D-amino acids and free tRNA molecules, this enzyme counteracts the toxicity associated with the formation of D-aminoacyl-tRNA entities in vivo and helps enforce protein L-homochirality. This Dehalococcoides mccartyi (strain ATCC BAA-2266 / KCTC 15142 / 195) (Dehalococcoides ethenogenes (strain 195)) protein is D-aminoacyl-tRNA deacylase.